Reading from the N-terminus, the 81-residue chain is Pyruvate synthase subunit PorD (81 aa).

2 consecutive 4Fe-4S ferredoxin-type domains span residues 25 to 50 and 51 to 80; these read FKPV…GCIN and REHE…MERE. Residues C34, C37, C40, C44, C60, C63, C66, and C70 each coordinate [4Fe-4S] cluster.

Heterotetramer of one alpha, one beta, one delta and one gamma chain. [4Fe-4S] cluster is required as a cofactor.

The protein is Pyruvate synthase subunit PorD (porD) of Methanothermobacter thermautotrophicus (strain ATCC 29096 / DSM 1053 / JCM 10044 / NBRC 100330 / Delta H) (Methanobacterium thermoautotrophicum).